The primary structure comprises 359 residues: UDP-2-acetamido-2-deoxy-3-oxo-D-glucuronate aminotransferase (359 aa).

Gly-29, Tyr-31, and Ser-184 together coordinate UDP-2-acetamido-2-deoxy-alpha-D-ribo-hex-3-uluronate. An N6-(pyridoxal phosphate)lysine modification is found at Lys-185. 3 residues coordinate UDP-2-acetamido-2-deoxy-alpha-D-ribo-hex-3-uluronate: Arg-229, His-308, and Tyr-309.

It belongs to the DegT/DnrJ/EryC1 family. Homodimer. Pyridoxal 5'-phosphate serves as cofactor.

The enzyme catalyses UDP-2-acetamido-2-deoxy-alpha-D-ribo-hex-3-uluronate + L-glutamate = UDP-2-acetamido-3-amino-2,3-dideoxy-alpha-D-glucuronate + 2-oxoglutarate. Its pathway is bacterial outer membrane biogenesis; LPS O-antigen biosynthesis. In terms of biological role, plays a role in the biosynthesis of B-band O antigen for serotype O5. Catalyzes the amination of UDP-2-acetamido-2-deoxy-3-oxo-D-glucuronic acid (UDP-3-oxo-D-GlcNAcA) to UDP-2-acetamido-3-amino-2,3-dideoxy-D-glucuronic acid (UDP-GlcNAc3NA), using L-glutamate as the preferred amine donor. This is UDP-2-acetamido-2-deoxy-3-oxo-D-glucuronate aminotransferase from Pseudomonas aeruginosa (strain ATCC 15692 / DSM 22644 / CIP 104116 / JCM 14847 / LMG 12228 / 1C / PRS 101 / PAO1).